The chain runs to 554 residues: Hydroxylamine reductase (554 aa).

[2Fe-2S] cluster contacts are provided by cysteine 3, cysteine 6, cysteine 18, and cysteine 25. The hybrid [4Fe-2O-2S] cluster site is built by histidine 252, glutamate 276, cysteine 320, cysteine 408, cysteine 436, cysteine 461, glutamate 495, and lysine 497. Cysteine 408 is modified (cysteine persulfide).

Belongs to the HCP family. The cofactor is [2Fe-2S] cluster. Hybrid [4Fe-2O-2S] cluster is required as a cofactor.

It localises to the cytoplasm. It carries out the reaction A + NH4(+) + H2O = hydroxylamine + AH2 + H(+). In terms of biological role, catalyzes the reduction of hydroxylamine to form NH(3) and H(2)O. The sequence is that of Hydroxylamine reductase from Shewanella baltica (strain OS185).